Here is a 98-residue protein sequence, read N- to C-terminus: Cell division protein FtsB (98 aa).

Residues 1-3 (MKR) lie on the Cytoplasmic side of the membrane. The helical transmembrane segment at 4–21 (LLFVLIALLAMLQYRLWL) threads the bilayer. Topologically, residues 22–98 (GDKSLADSFH…GGERGGVPEN (77 aa)) are periplasmic. The stretch at 31–74 (HLQEQIKLQQQSNAQLVARNQVLREEISDLRSGTEALEERARNE) forms a coiled coil.

The protein belongs to the FtsB family. Part of a complex composed of FtsB, FtsL and FtsQ.

Its subcellular location is the cell inner membrane. Its function is as follows. Essential cell division protein. May link together the upstream cell division proteins, which are predominantly cytoplasmic, with the downstream cell division proteins, which are predominantly periplasmic. The chain is Cell division protein FtsB from Shewanella pealeana (strain ATCC 700345 / ANG-SQ1).